A 156-amino-acid chain; its full sequence is Ribonuclease pancreatic (156 aa).

The signal sequence occupies residues 1–28 (MALEKSLALLPLLVLVLLVLGWVQPSLG). The segment covering 33-43 (AKKFQRQHMDS) has biased composition (basic and acidic residues). Residues 33–52 (AKKFQRQHMDSDGSPSSNPT) form a disordered region. Substrate contacts are provided by K35 and R38. Catalysis depends on H40, which acts as the Proton acceptor. Intrachain disulfides connect C54/C112, C68/C123, C86/C138, and C93/C100. The N-linked (GlcNAc...) asparagine glycan is linked to N62. Residues 69-73 (KPVNT), K94, and R113 each bind substrate. N-linked (GlcNAc...) asparagine glycosylation is present at N116. The Proton donor role is filled by H147.

It belongs to the pancreatic ribonuclease family. In terms of assembly, monomer. Interacts with and forms tight 1:1 complexes with RNH1. Dimerization of two such complexes may occur. Interaction with RNH1 inhibits this protein.

It is found in the secreted. It catalyses the reaction an [RNA] containing cytidine + H2O = an [RNA]-3'-cytidine-3'-phosphate + a 5'-hydroxy-ribonucleotide-3'-[RNA].. It carries out the reaction an [RNA] containing uridine + H2O = an [RNA]-3'-uridine-3'-phosphate + a 5'-hydroxy-ribonucleotide-3'-[RNA].. Its function is as follows. Endonuclease that catalyzes the cleavage of RNA on the 3' side of pyrimidine nucleotides. Acts on single-stranded and double-stranded RNA. The sequence is that of Ribonuclease pancreatic (RNASE1) from Saimiri sciureus (Common squirrel monkey).